The chain runs to 121 residues: Small ribosomal subunit protein uS13 (121 aa).

The segment at 91–121 is disordered; it reads HRRGLPVRGQKTKNNARTRKGPVKTVANKKK.

It belongs to the universal ribosomal protein uS13 family. As to quaternary structure, part of the 30S ribosomal subunit. Forms a loose heterodimer with protein S19. Forms two bridges to the 50S subunit in the 70S ribosome.

Functionally, located at the top of the head of the 30S subunit, it contacts several helices of the 16S rRNA. In the 70S ribosome it contacts the 23S rRNA (bridge B1a) and protein L5 of the 50S subunit (bridge B1b), connecting the 2 subunits; these bridges are implicated in subunit movement. Contacts the tRNAs in the A and P-sites. The chain is Small ribosomal subunit protein uS13 from Staphylococcus haemolyticus (strain JCSC1435).